Here is a 186-residue protein sequence, read N- to C-terminus: Elongation factor P (186 aa).

It belongs to the elongation factor P family.

It localises to the cytoplasm. The protein operates within protein biosynthesis; polypeptide chain elongation. In terms of biological role, involved in peptide bond synthesis. Stimulates efficient translation and peptide-bond synthesis on native or reconstituted 70S ribosomes in vitro. Probably functions indirectly by altering the affinity of the ribosome for aminoacyl-tRNA, thus increasing their reactivity as acceptors for peptidyl transferase. In Crocosphaera subtropica (strain ATCC 51142 / BH68) (Cyanothece sp. (strain ATCC 51142)), this protein is Elongation factor P.